The chain runs to 359 residues: Fructose-bisphosphate aldolase (359 aa).

S50 lines the D-glyceraldehyde 3-phosphate pocket. The Proton donor role is filled by D83. Zn(2+) contacts are provided by H84, D105, E142, and H198. Position 199 (G199) interacts with dihydroxyacetone phosphate. Residue H232 participates in Zn(2+) binding. Dihydroxyacetone phosphate is bound by residues 233–235 (GSS) and 275–278 (NIDT).

This sequence belongs to the class II fructose-bisphosphate aldolase family. Requires Zn(2+) as cofactor.

It catalyses the reaction beta-D-fructose 1,6-bisphosphate = D-glyceraldehyde 3-phosphate + dihydroxyacetone phosphate. It functions in the pathway carbohydrate degradation; glycolysis; D-glyceraldehyde 3-phosphate and glycerone phosphate from D-glucose: step 4/4. Catalyzes the aldol condensation of dihydroxyacetone phosphate (DHAP or glycerone-phosphate) with glyceraldehyde 3-phosphate (G3P) to form fructose 1,6-bisphosphate (FBP) in gluconeogenesis and the reverse reaction in glycolysis. The polypeptide is Fructose-bisphosphate aldolase (fba) (Nostoc commune).